Consider the following 112-residue polypeptide: Small ribosomal subunit protein bS6c (112 aa).

Belongs to the bacterial ribosomal protein bS6 family.

It localises to the plastid. Its subcellular location is the chloroplast. In terms of biological role, binds together with bS18 to 16S ribosomal RNA. This is Small ribosomal subunit protein bS6c (rps6) from Porphyra purpurea (Red seaweed).